The chain runs to 148 residues: 3-dehydroquinate dehydratase (148 aa).

The active-site Proton acceptor is the Y23. Substrate-binding residues include N75, H81, and D88. Catalysis depends on H101, which acts as the Proton donor. Substrate contacts are provided by residues 102 to 103 and R112; that span reads LS.

Belongs to the type-II 3-dehydroquinase family. Homododecamer.

It carries out the reaction 3-dehydroquinate = 3-dehydroshikimate + H2O. It functions in the pathway metabolic intermediate biosynthesis; chorismate biosynthesis; chorismate from D-erythrose 4-phosphate and phosphoenolpyruvate: step 3/7. In terms of biological role, catalyzes a trans-dehydration via an enolate intermediate. This is 3-dehydroquinate dehydratase from Xylella fastidiosa (strain M23).